The chain runs to 199 residues: Superoxide dismutase [Mn/Fe] (199 aa).

Fe(3+)-binding residues include H27, H81, D161, and H165. H27, H81, D161, and H165 together coordinate Mn(2+).

This sequence belongs to the iron/manganese superoxide dismutase family. As to quaternary structure, homodimer. The cofactor is Mn(2+). Fe(3+) is required as a cofactor.

It catalyses the reaction 2 superoxide + 2 H(+) = H2O2 + O2. Functionally, destroys superoxide anion radicals which are normally produced within the cells and which are toxic to biological systems. Catalyzes the dismutation of superoxide anion radicals into O2 and H2O2 by successive reduction and oxidation of the transition metal ion at the active site. In Staphylococcus epidermidis (strain ATCC 35984 / DSM 28319 / BCRC 17069 / CCUG 31568 / BM 3577 / RP62A), this protein is Superoxide dismutase [Mn/Fe] (sodA).